The following is a 104-amino-acid chain: Pterin-4-alpha-carbinolamine dehydratase (104 aa).

A2 carries the post-translational modification N-acetylalanine. Residues 61 to 63 (DHH) and 78 to 81 (STHE) contribute to the substrate site.

Belongs to the pterin-4-alpha-carbinolamine dehydratase family. As to quaternary structure, homotetramer and homodimer. As to expression, the major tissues expressing cDcoH are hypothalamus, kidney and liver.

The protein localises to the cytoplasm. It is found in the nucleus. The enzyme catalyses (4aS,6R)-4a-hydroxy-L-erythro-5,6,7,8-tetrahydrobiopterin = (6R)-L-erythro-6,7-dihydrobiopterin + H2O. Functionally, involved in tetrahydrobiopterin biosynthesis. Seems to both prevent the formation of 7-pterins and accelerate the formation of quinonoid-BH2. Coactivator for HNF1A-dependent transcription. Regulates the dimerization of homeodomain protein HNF1A and enhances its transcriptional activity. Also acts as a coactivator for HNF1B-dependent transcription. This chain is Pterin-4-alpha-carbinolamine dehydratase (PCBD1), found in Gallus gallus (Chicken).